Reading from the N-terminus, the 515-residue chain is ATP synthase subunit alpha (515 aa).

171 to 178 provides a ligand contact to ATP; the sequence is GDRQTGKT.

Belongs to the ATPase alpha/beta chains family. As to quaternary structure, F-type ATPases have 2 components, CF(1) - the catalytic core - and CF(0) - the membrane proton channel. CF(1) has five subunits: alpha(3), beta(3), gamma(1), delta(1), epsilon(1). CF(0) has three main subunits: a(1), b(2) and c(9-12). The alpha and beta chains form an alternating ring which encloses part of the gamma chain. CF(1) is attached to CF(0) by a central stalk formed by the gamma and epsilon chains, while a peripheral stalk is formed by the delta and b chains.

The protein localises to the cell inner membrane. It carries out the reaction ATP + H2O + 4 H(+)(in) = ADP + phosphate + 5 H(+)(out). Its function is as follows. Produces ATP from ADP in the presence of a proton gradient across the membrane. The alpha chain is a regulatory subunit. The sequence is that of ATP synthase subunit alpha from Xylella fastidiosa (strain Temecula1 / ATCC 700964).